The sequence spans 274 residues: NH(3)-dependent NAD(+) synthetase (274 aa).

An ATP-binding site is contributed by 46–53 (GISGGQDS). Asp52 contacts Mg(2+). Arg140 provides a ligand contact to deamido-NAD(+). Thr160 lines the ATP pocket. Glu165 serves as a coordination point for Mg(2+). Deamido-NAD(+) contacts are provided by Lys173 and Asp180. Residues Lys189 and Thr211 each contribute to the ATP site. 260 to 261 (HK) contacts deamido-NAD(+).

This sequence belongs to the NAD synthetase family. In terms of assembly, homodimer.

It carries out the reaction deamido-NAD(+) + NH4(+) + ATP = AMP + diphosphate + NAD(+) + H(+). It functions in the pathway cofactor biosynthesis; NAD(+) biosynthesis; NAD(+) from deamido-NAD(+) (ammonia route): step 1/1. Catalyzes the ATP-dependent amidation of deamido-NAD to form NAD. Uses ammonia as a nitrogen source. This chain is NH(3)-dependent NAD(+) synthetase, found in Listeria welshimeri serovar 6b (strain ATCC 35897 / DSM 20650 / CCUG 15529 / CIP 8149 / NCTC 11857 / SLCC 5334 / V8).